Here is a 168-residue protein sequence, read N- to C-terminus: Large ribosomal subunit protein uL10 (168 aa).

It belongs to the universal ribosomal protein uL10 family. As to quaternary structure, part of the ribosomal stalk of the 50S ribosomal subunit. The N-terminus interacts with L11 and the large rRNA to form the base of the stalk. The C-terminus forms an elongated spine to which L12 dimers bind in a sequential fashion forming a multimeric L10(L12)X complex.

Its function is as follows. Forms part of the ribosomal stalk, playing a central role in the interaction of the ribosome with GTP-bound translation factors. The protein is Large ribosomal subunit protein uL10 of Lacticaseibacillus casei (strain BL23) (Lactobacillus casei).